The primary structure comprises 207 residues: LexA repressor (207 aa).

Residues 28–48 constitute a DNA-binding region (H-T-H motif); the sequence is VREIGEAVGLASSSTVHGHLA. Catalysis depends on for autocatalytic cleavage activity residues serine 129 and lysine 167.

Belongs to the peptidase S24 family. In terms of assembly, homodimer.

The enzyme catalyses Hydrolysis of Ala-|-Gly bond in repressor LexA.. Represses a number of genes involved in the response to DNA damage (SOS response), including recA and lexA. In the presence of single-stranded DNA, RecA interacts with LexA causing an autocatalytic cleavage which disrupts the DNA-binding part of LexA, leading to derepression of the SOS regulon and eventually DNA repair. The sequence is that of LexA repressor from Geobacillus kaustophilus (strain HTA426).